The chain runs to 247 residues: UPF0246 protein LSL_1719 (247 aa).

Belongs to the UPF0246 family.

The protein is UPF0246 protein LSL_1719 of Ligilactobacillus salivarius (strain UCC118) (Lactobacillus salivarius).